The chain runs to 512 residues: Polyamine aminopropyltransferase (512 aa).

7 helical membrane-spanning segments follow: residues 19–39 (IVSI…SYIL), 48–68 (LTIS…EKFM), 76–96 (VWIE…MFGI), 108–128 (YLYS…PILI), 151–171 (AGGL…FGMV), 172–192 (KTAF…LWLF), and 199–219 (FIVH…GLFF). The PABS domain occupies 215 to 450 (AGLFFGEEMA…GNWGFVMASR (236 aa)). The interval 217-457 (LFFGEEMAFN…ASREEIDLDI (241 aa)) is spermidine synthase. An S-methyl-5'-thioadenosine-binding site is contributed by Q245. Residues H275 and D299 each coordinate spermidine. S-methyl-5'-thioadenosine contacts are provided by residues D319 and 353 to 354 (DA). Catalysis depends on D371, which acts as the Proton acceptor.

The protein belongs to the spermidine/spermine synthase family. In terms of assembly, homodimer or homotetramer.

It localises to the cell membrane. It catalyses the reaction S-adenosyl 3-(methylsulfanyl)propylamine + putrescine = S-methyl-5'-thioadenosine + spermidine + H(+). It participates in amine and polyamine biosynthesis; spermidine biosynthesis; spermidine from putrescine: step 1/1. In terms of biological role, catalyzes the irreversible transfer of a propylamine group from the amino donor S-adenosylmethioninamine (decarboxy-AdoMet) to putrescine (1,4-diaminobutane) to yield spermidine. The sequence is that of Polyamine aminopropyltransferase from Oceanobacillus iheyensis (strain DSM 14371 / CIP 107618 / JCM 11309 / KCTC 3954 / HTE831).